The chain runs to 602 residues: Elongation factor 4 (602 aa).

Residues 8–189 (KNIRNFSIIA…KIITTIPAPS (182 aa)) enclose the tr-type G domain. Residues 20–25 (DHGKST) and 136–139 (NKID) contribute to the GTP site.

This sequence belongs to the TRAFAC class translation factor GTPase superfamily. Classic translation factor GTPase family. LepA subfamily.

Its subcellular location is the cell inner membrane. It carries out the reaction GTP + H2O = GDP + phosphate + H(+). Required for accurate and efficient protein synthesis under certain stress conditions. May act as a fidelity factor of the translation reaction, by catalyzing a one-codon backward translocation of tRNAs on improperly translocated ribosomes. Back-translocation proceeds from a post-translocation (POST) complex to a pre-translocation (PRE) complex, thus giving elongation factor G a second chance to translocate the tRNAs correctly. Binds to ribosomes in a GTP-dependent manner. The sequence is that of Elongation factor 4 from Helicobacter pylori (strain HPAG1).